The sequence spans 57 residues: UPF0391 membrane protein RPC_2356 (57 aa).

2 helical membrane-spanning segments follow: residues 6–26 (WALI…TGIS) and 35–55 (ILFY…LTIF).

Belongs to the UPF0391 family.

The protein resides in the cell membrane. This Rhodopseudomonas palustris (strain BisB18) protein is UPF0391 membrane protein RPC_2356.